The chain runs to 278 residues: 2-dehydro-3-deoxyphosphooctonate aldolase (278 aa).

This sequence belongs to the KdsA family.

Its subcellular location is the cytoplasm. It carries out the reaction D-arabinose 5-phosphate + phosphoenolpyruvate + H2O = 3-deoxy-alpha-D-manno-2-octulosonate-8-phosphate + phosphate. It participates in carbohydrate biosynthesis; 3-deoxy-D-manno-octulosonate biosynthesis; 3-deoxy-D-manno-octulosonate from D-ribulose 5-phosphate: step 2/3. Its pathway is bacterial outer membrane biogenesis; lipopolysaccharide biosynthesis. The chain is 2-dehydro-3-deoxyphosphooctonate aldolase from Bartonella tribocorum (strain CIP 105476 / IBS 506).